A 183-amino-acid polypeptide reads, in one-letter code: Small ribosomal subunit protein uS4c (183 aa).

The S4 RNA-binding domain maps to 82-143; sequence MRLDNILFRL…KQRSKALIQN (62 aa).

Belongs to the universal ribosomal protein uS4 family. In terms of assembly, part of the 30S ribosomal subunit. Contacts protein S5. The interaction surface between S4 and S5 is involved in control of translational fidelity.

Its subcellular location is the plastid. The protein resides in the chloroplast. Its function is as follows. One of the primary rRNA binding proteins, it binds directly to 16S rRNA where it nucleates assembly of the body of the 30S subunit. In terms of biological role, with S5 and S12 plays an important role in translational accuracy. The polypeptide is Small ribosomal subunit protein uS4c (rps4) (Freesia sp. (strain Lejeune 1997)).